The sequence spans 334 residues: Heat-inducible transcription repressor HrcA (334 aa).

Belongs to the HrcA family.

In terms of biological role, negative regulator of class I heat shock genes (grpE-dnaK-dnaJ and groELS operons). Prevents heat-shock induction of these operons. The protein is Heat-inducible transcription repressor HrcA of Acidovorax sp. (strain JS42).